The chain runs to 360 residues: D-alanine--D-alanine ligase (360 aa).

An ATP-grasp domain is found at K134–Q343. An ATP-binding site is contributed by A169–E224. 3 residues coordinate Mg(2+): D297, E310, and N312.

Belongs to the D-alanine--D-alanine ligase family. Mg(2+) is required as a cofactor. The cofactor is Mn(2+).

It is found in the cytoplasm. It catalyses the reaction 2 D-alanine + ATP = D-alanyl-D-alanine + ADP + phosphate + H(+). Its pathway is cell wall biogenesis; peptidoglycan biosynthesis. Functionally, cell wall formation. The chain is D-alanine--D-alanine ligase from Lactobacillus acidophilus (strain ATCC 700396 / NCK56 / N2 / NCFM).